The chain runs to 374 residues: DNA replication and repair protein RecF (374 aa).

An ATP-binding site is contributed by 30 to 37; the sequence is GNNAQGKS.

The protein belongs to the RecF family.

The protein localises to the cytoplasm. Its function is as follows. The RecF protein is involved in DNA metabolism; it is required for DNA replication and normal SOS inducibility. RecF binds preferentially to single-stranded, linear DNA. It also seems to bind ATP. The polypeptide is DNA replication and repair protein RecF (Nostoc punctiforme (strain ATCC 29133 / PCC 73102)).